Reading from the N-terminus, the 669-residue chain is RNA-binding protein 14 (669 aa).

RRM domains follow at residues 1–73 and 79–149; these read MKIF…MSRP and WKIF…LSTK. Residues K126, K135, K138, K149, and K153 each participate in a glycyl lysine isopeptide (Lys-Gly) (interchain with G-Cter in SUMO2) cross-link. 2 disordered regions span residues 147–175 and 193–232; these read STKGQKKGPGLAVQSGDKTKKPGAGDTAF and NSTGGFDGQARQPTPPFFGRDRSPLRRSPPRASYVAPLTA. Position 161 is a phosphoserine (S161). Residue K164 is modified to N6-acetyllysine; alternate. K164 participates in a covalent cross-link: Glycyl lysine isopeptide (Lys-Gly) (interchain with G-Cter in SUMO2); alternate. T206 carries the post-translational modification Phosphothreonine. 6 positions are modified to phosphoserine: S220, S242, S244, S256, S272, and S280. The interval 284–303 is disordered; that stretch reads PYRGQLASPSSQSAAASSLG. Positions 287 to 303 are enriched in low complexity; the sequence is GQLASPSSQSAAASSLG. Positions 307–354 are TRBP-interacting domain; interaction with STIL; the sequence is GAQPSASALSSYGGQAAAASSLNSYGAQGSSLASYGNQPSSYGAQAAS. Residues S520, S523, S527, and S562 each carry the phosphoserine modification. The tract at residues 566-590 is disordered; that stretch reads VANANSTPPPYERTRLSPPRASYDD. Residue T572 is modified to Phosphothreonine. S582 is subject to Phosphoserine. Residue K600 forms a Glycyl lysine isopeptide (Lys-Gly) (interchain with G-Cter in SUMO2) linkage. A phosphoserine mark is found at S618, S620, S623, S627, S643, and S649.

As to quaternary structure, isoform 1: Interacts with NCOA6, CITED1 and XRCC5/KU86. Isoform 1: Interacts with SS18 isoform 1. Isoform 1: Interacts with SS18 isoform 2. Interacts with STIL and interferes with its interaction with CPAP. Interacts with gamma-tubulin. Part of the HDP-RNP complex composed of at least HEXIM1, PRKDC, XRCC5, XRCC6, paraspeckle proteins (SFPQ, NONO, PSPC1, RBM14, and MATR3) and NEAT1 RNA. Interacts with RBPMS; the interaction allows cooperative assembly of RNA-bound stable cell-specific alternative splicing regulatory complexes. Expressed in all tissues tested, including brain, heart, skeletal muscle, colon, thymus, spleen, kidney, liver, small intestine, placenta, lung and peripheral blood lymphocytes.

It is found in the nucleus. It localises to the nucleolus. The protein resides in the cytoplasm. Its function is as follows. Isoform 1 may function as a nuclear receptor coactivator, enhancing transcription through other coactivators such as NCOA6 and CITED1. Isoform 2, functions as a transcriptional repressor, modulating transcriptional activities of coactivators including isoform 1, NCOA6 and CITED1. Regulates centriole biogenesis by suppressing the formation of aberrant centriolar protein complexes in the cytoplasm and thus preserving mitotic spindle integrity. Prevents the formation of the STIL-CPAP complex (which can induce the formation of aberrant centriolar protein complexes) by interfering with the interaction of STIL with CPAP. Plays a role in the regulation of DNA virus-mediated innate immune response by assembling into the HDP-RNP complex, a complex that serves as a platform for IRF3 phosphorylation and subsequent innate immune response activation through the cGAS-STING pathway. Also involved in the regulation of pre-mRNA alternative splicing. This Homo sapiens (Human) protein is RNA-binding protein 14 (RBM14).